The primary structure comprises 976 residues: Ephrin type-A receptor 2 (976 aa).

Positions 1-23 (MELWAARACFVLLWGCALAPATA) are cleaved as a signal peptide. The segment at 1-206 (MELWAARACF…YYKKCPELLQ (206 aa)) is mediates interaction with CLDN4. Residues 25-537 (QGKEVVLLDF…SPEGSGSLAV (513 aa)) are Extracellular-facing. An Eph LBD domain is found at 28–206 (EVVLLDFAAA…YYKKCPELLQ (179 aa)). 2 disulfides stabilise this stretch: Cys-70–Cys-188 and Cys-105–Cys-115. The Fibronectin type-III 1 domain maps to 328–432 (PPSAPHYLTA…TSRSFRTASV (105 aa)). 2 N-linked (GlcNAc...) asparagine glycosylation sites follow: Asn-407 and Asn-435. A Fibronectin type-III 2 domain is found at 438-529 (EPPKVRLEGR…KVHEFQTLSP (92 aa)). Residues 538–558 (IGGVAVCVVLLLLLAGAGFFI) traverse the membrane as a helical segment. Residues 559–976 (HRRRKNLRAR…DQVNTVGIPI (418 aa)) are Cytoplasmic-facing. Position 570 is a phosphoserine (Ser-570). Tyr-575 carries the phosphotyrosine modification. The residue at position 579 (Ser-579) is a Phosphoserine. A Phosphotyrosine; by autocatalysis modification is found at Tyr-588. Tyr-594 carries the post-translational modification Phosphotyrosine. Residues 606-906 (TEIHPSCVTR…STSGSEGVPF (301 aa)) are mediates interaction with ARHGEF16. The 263-residue stretch at 613–875 (VTRQKVIGAG…DIVSILDKLI (263 aa)) folds into the Protein kinase domain. 619-627 (IGAGEFGEV) serves as a coordination point for ATP. A Phosphotyrosine modification is found at Tyr-628. ATP is bound at residue Lys-646. A Phosphothreonine modification is found at Thr-647. At Tyr-735 the chain carries Phosphotyrosine; by autocatalysis. Residue Asp-739 is the Proton acceptor of the active site. Tyr-772 carries the phosphotyrosine modification. A phosphoserine mark is found at Ser-869, Ser-892, Ser-897, and Ser-901. The segment at 886–976 (DFDPRVSIRL…DQVNTVGIPI (91 aa)) is negatively regulates interaction with ARHGEF16. In terms of domain architecture, SAM spans 904–968 (VPFRTVSEWL…AYSLLGLKDQ (65 aa)). The residue at position 921 (Tyr-921) is a Phosphotyrosine; by autocatalysis. Phosphotyrosine is present on Tyr-930. Positions 974–976 (IPI) match the PDZ-binding motif.

Belongs to the protein kinase superfamily. Tyr protein kinase family. Ephrin receptor subfamily. In terms of assembly, homodimer. Interacts with SLA. Interacts (phosphorylated form) with VAV2, VAV3 and PI3-kinase p85 subunit (PIK3R1, PIK3R2 or PIK3R3); critical for the EFNA1-induced activation of RAC1 which stimulates cell migration. Interacts with INPPL1; regulates activated EPHA2 endocytosis and degradation. Interacts (inactivated form) with PTK2/FAK1 and interacts (EFNA1 ligand-activated form) with PTPN11; regulates integrin-mediated adhesion. Interacts with ARHGEF16, DOCK4 and ELMO2; mediates ligand-independent activation of RAC1 which stimulates cell migration. Interacts with CLDN4; phosphorylates CLDN4 and may regulate tight junctions. Interacts with ACP1. Interacts with ANKS1A. Interacts with CEMIP. Interacts with NCK1; may regulate EPHA2 activity in cell migration and adhesion. Interacts with TIMD4. Autophosphorylates. Phosphorylated on tyrosine upon binding and activation by EFNA1. Phosphorylated residues Tyr-588 and Tyr-594 are required for binding VAV2 and VAV3 while phosphorylated residues Tyr-735 and Tyr-930 are required for binding PI3-kinase p85 subunit (PIK3R1, PIK3R2 or PIK3R3). These phosphorylated residues are critical for recruitment of VAV2 and VAV3 and PI3-kinase p85 subunit which transduce downstream signaling to activate RAC1 GTPase and cell migration. Dephosphorylation of Tyr-930 by PTPRF prevents the interaction of EPHA2 with NCK1. Phosphorylated at Ser-897 by PKB; serum-induced phosphorylation which targets EPHA2 to the cell leading edge and stimulates cell migration. Phosphorylation by PKB is inhibited by EFNA1-activated EPHA2 which regulates PKB activity via a reciprocal regulatory loop. Phosphorylated at Ser-897 in response to TNF by RPS6KA1 and RPS6KA3; RPS6KA-EPHA2 signaling pathway controls cell migration. Phosphorylated at Ser-897 by PKA; blocks cell retraction induced by EPHA2 kinase activity. Dephosphorylated by ACP1. Post-translationally, ubiquitinated by CHIP/STUB1. Ubiquitination is regulated by the HSP90 chaperone and regulates the receptor stability and activity through proteasomal degradation. ANKS1A prevents ubiquitination and degradation.

Its subcellular location is the cell membrane. It is found in the cell projection. The protein resides in the ruffle membrane. It localises to the lamellipodium membrane. The protein localises to the cell junction. Its subcellular location is the focal adhesion. It catalyses the reaction L-tyrosyl-[protein] + ATP = O-phospho-L-tyrosyl-[protein] + ADP + H(+). Functionally, receptor tyrosine kinase which binds promiscuously membrane-bound ephrin-A family ligands residing on adjacent cells, leading to contact-dependent bidirectional signaling into neighboring cells. The signaling pathway downstream of the receptor is referred to as forward signaling while the signaling pathway downstream of the ephrin ligand is referred to as reverse signaling. Activated by the ligand ephrin-A1/EFNA1 regulates migration, integrin-mediated adhesion, proliferation and differentiation of cells. Regulates cell adhesion and differentiation through DSG1/desmoglein-1 and inhibition of the ERK1/ERK2 signaling pathway. May also participate in UV radiation-induced apoptosis and have a ligand-independent stimulatory effect on chemotactic cell migration. During development, may function in distinctive aspects of pattern formation and subsequently in development of several fetal tissues. Involved for instance in angiogenesis, in early hindbrain development and epithelial proliferation and branching morphogenesis during mammary gland development. Engaged by the ligand ephrin-A5/EFNA5 may regulate lens fiber cells shape and interactions and be important for lens transparency development and maintenance. With ephrin-A2/EFNA2 may play a role in bone remodeling through regulation of osteoclastogenesis and osteoblastogenesis. The polypeptide is Ephrin type-A receptor 2 (EPHA2) (Macaca fascicularis (Crab-eating macaque)).